Here is a 459-residue protein sequence, read N- to C-terminus: Sperm microtubule associated protein 2-like (459 aa).

A disordered region spans residues 1–138 (MEEGDFSGSS…QEDGKDDLFP (138 aa)). Positions 21–30 (TTTTTETRTT) are enriched in low complexity. Positions 47 to 63 (NGDEAEAVGEEGQEEDY) are enriched in acidic residues. Positions 64–73 (EGSKTHKSHE) are enriched in basic and acidic residues. Positions 77 to 87 (SFRSHNSSDPP) are enriched in polar residues. Basic and acidic residues-rich tracts occupy residues 91-112 (KASD…KTSD) and 127-136 (ERQEDGKDDL). THEG repeat units follow at residues 172–190 (KKCF…PKKQ), 212–231 (AALK…PRLV), 258–277 (PALV…PNKF), 291–310 (TTRY…AKGT), 327–346 (STLS…PRIK), 367–386 (AALL…SKRV), 403–422 (AATH…PHTR), and 440–459 (SALK…PIVR).

The polypeptide is Sperm microtubule associated protein 2-like (Mus musculus (Mouse)).